Reading from the N-terminus, the 635-residue chain is 1-deoxy-D-xylulose-5-phosphate synthase (635 aa).

Residues H78 and 119-121 (GHS) contribute to the thiamine diphosphate site. Residue D151 participates in Mg(2+) binding. Thiamine diphosphate contacts are provided by residues 152 to 153 (GA), N180, Y289, and E371. A Mg(2+)-binding site is contributed by N180.

This sequence belongs to the transketolase family. DXPS subfamily. In terms of assembly, homodimer. Requires Mg(2+) as cofactor. Thiamine diphosphate serves as cofactor.

The enzyme catalyses D-glyceraldehyde 3-phosphate + pyruvate + H(+) = 1-deoxy-D-xylulose 5-phosphate + CO2. It participates in metabolic intermediate biosynthesis; 1-deoxy-D-xylulose 5-phosphate biosynthesis; 1-deoxy-D-xylulose 5-phosphate from D-glyceraldehyde 3-phosphate and pyruvate: step 1/1. Functionally, catalyzes the acyloin condensation reaction between C atoms 2 and 3 of pyruvate and glyceraldehyde 3-phosphate to yield 1-deoxy-D-xylulose-5-phosphate (DXP). This is 1-deoxy-D-xylulose-5-phosphate synthase from Bartonella tribocorum (strain CIP 105476 / IBS 506).